The primary structure comprises 348 residues: L-threonine 3-dehydrogenase (348 aa).

Cys42 provides a ligand contact to Zn(2+). Residues Thr44 and His47 each act as charge relay system in the active site. Zn(2+)-binding residues include His67, Glu68, Cys97, Cys100, Cys103, and Cys111. Residues Leu179, Glu199, Arg204, 266–268 (LGL), and 291–292 (IT) contribute to the NAD(+) site.

This sequence belongs to the zinc-containing alcohol dehydrogenase family. In terms of assembly, homodimer. Homotetramer; dimer of dimers. The cofactor is Zn(2+).

It localises to the cytoplasm. The enzyme catalyses L-threonine + NAD(+) = (2S)-2-amino-3-oxobutanoate + NADH + H(+). It functions in the pathway amino-acid degradation; L-threonine degradation via oxydo-reductase pathway; glycine from L-threonine: step 1/2. With respect to regulation, is totally inhibited by EDTA in vitro. In terms of biological role, catalyzes the NAD(+)-dependent oxidation of L-threonine to 2-amino-3-ketobutyrate. Is much less efficient when using NADP(+) instead of NAD(+). To a lesser extent, also catalyzes the oxidation of L-serine and DL-threo-3-phenylserine, but not that of L-allo-threonine, D-threonine and D-allo-threonine and many other L-amino acids. This chain is L-threonine 3-dehydrogenase, found in Pyrococcus horikoshii (strain ATCC 700860 / DSM 12428 / JCM 9974 / NBRC 100139 / OT-3).